A 159-amino-acid polypeptide reads, in one-letter code: Ribosomal RNA large subunit methyltransferase H (159 aa).

S-adenosyl-L-methionine-binding positions include Leu-76, Gly-108, and 127-132 (FSKMTF).

The protein belongs to the RNA methyltransferase RlmH family. As to quaternary structure, homodimer.

Its subcellular location is the cytoplasm. It carries out the reaction pseudouridine(1915) in 23S rRNA + S-adenosyl-L-methionine = N(3)-methylpseudouridine(1915) in 23S rRNA + S-adenosyl-L-homocysteine + H(+). In terms of biological role, specifically methylates the pseudouridine at position 1915 (m3Psi1915) in 23S rRNA. The protein is Ribosomal RNA large subunit methyltransferase H of Bifidobacterium animalis subsp. lactis (strain AD011).